The sequence spans 967 residues: Sodium/potassium exporting P-type ATPase 1 (967 aa).

At 1–70 the chain is on the cytoplasmic side; it reads MEGSGDKRHE…GVNPWKILLR (70 aa). A helical transmembrane segment spans residues 71–91; it reads QVSNGLTAVLVVAMVVSFAVK. Asp92 is a topological domain (extracellular). A helical membrane pass occupies residues 93–113; it reads YAEAGVLVIVIAFNTIVGFVQ. The Cytoplasmic segment spans residues 114–254; it reads EYRAEKTMDA…TQSTPMQRKL (141 aa). A helical transmembrane segment spans residues 255-275; sequence NLMAYMLLAFALLLALIVFAV. Residues 276-283 are Extracellular-facing; sequence NKFNFSTE. Asn279 is a glycosylation site (N-linked (GlcNAc...) asparagine). A helical transmembrane segment spans residues 284–304; that stretch reads VVIYAIALSIAIIPEGLIAVI. The Cytoplasmic portion of the chain corresponds to 305-732; the sequence is TIVQALGVRR…GRRIFSNIKK (428 aa). Asp340 serves as the catalytic 4-aspartylphosphate intermediate. 2 residues coordinate Mg(2+): Asp340 and Thr342. 9 residues coordinate ATP: Thr342, Glu425, Lys478, Arg523, Thr587, Gly588, Asp589, Arg651, and Lys657. Asp676 contributes to the Mg(2+) binding site. Asn679 contributes to the ATP binding site. A helical transmembrane segment spans residues 733-753; that stretch reads FVLHLLSTNVGQVIVLLIGLA. Over 754 to 812 the chain is Extracellular; the sequence is FKDRTGTSVFPLSPVQILFLNLVTGTPPAMALGIEPASSSVMQVPPHVKGLFTVELIMD. Residues 813-833 form a helical membrane-spanning segment; that stretch reads IFIFGTFIGILALASWVLVIY. The Cytoplasmic portion of the chain corresponds to 834-900; the sequence is PFGNSDLATL…GGASRFFSNK (67 aa). A helical transmembrane segment spans residues 901-921; the sequence is VLVASVFIGALLPIPTIYIGT. At 922-931 the chain is on the extracellular side; sequence LNTEVFKQEG. Residues 932-952 form a helical membrane-spanning segment; it reads ITWEWIIVIVSVFVFFLLSEF. The Cytoplasmic segment spans residues 953–967; that stretch reads YKLLKRRFIKTPYNM.

Belongs to the cation transport ATPase (P-type) (TC 3.A.3) family. Type IID subfamily. It depends on Mg(2+) as a cofactor. Post-translationally, the active site is phosphorylated in presence of sodium or potassium and in conditions of higher pH. Not phosphorylated in presence of calcium ions.

Its subcellular location is the cell membrane. It catalyses the reaction Na(+)(in) + ATP + H2O = Na(+)(out) + ADP + phosphate + H(+). The catalysed reaction is K(+)(in) + ATP + H2O = K(+)(out) + ADP + phosphate + H(+). Its function is as follows. Catalyzes the hydrolysis of ATP coupled with the export of sodium and potassium from the cell. May pump potassium inefficiently. May transport other cations such as lithium. Sodium/potassium efflux ATPases are involved in salt tolerance and maintaining the membrane potential across the plasma membrane in high salinity (Na+) or alkaline (K+) environments. In Physcomitrium patens (Spreading-leaved earth moss), this protein is Sodium/potassium exporting P-type ATPase 1.